The chain runs to 623 residues: Ciliated left-right organizer metallopeptidase (623 aa).

An N-terminal signal peptide occupies residues 1 to 20 (MSFLLCIGILLLPWFPCVCG). Residues 21-578 (KCIFDQIQRS…LFLVSEAKIS (558 aa)) are Extracellular-facing. Zn(2+) is bound at residue His-249. Glu-250 is a catalytic residue. 2 residues coordinate Zn(2+): His-253 and His-326. The chain crosses the membrane as a helical span at residues 579–599 (LAAVLSLMAVFALLSAAVLLY). Residues 600-623 (RKNLSVRVHAASYRTPLPHILYRN) lie on the Cytoplasmic side of the membrane.

This sequence belongs to the peptidase M8 family. Requires Zn(2+) as cofactor. In terms of tissue distribution, expressed specifically in dorsal forerunner cells (DFCs) that form a ciliated Kupffer's vesicle later.

Its subcellular location is the membrane. Its function is as follows. Plays an essential role for patterning the left-right axis. Requires solely on the left side, downstream of the leftward flow, but upstream of dand5, a nodal inhibitor involved in left-right patterning. This is Ciliated left-right organizer metallopeptidase (cirop) from Danio rerio (Zebrafish).